A 309-amino-acid chain; its full sequence is Probable pyridoxal 5'-phosphate synthase subunit PDX1 (309 aa).

Asp40 serves as a coordination point for D-ribose 5-phosphate. Lys97 serves as the catalytic Schiff-base intermediate with D-ribose 5-phosphate. D-ribose 5-phosphate is bound at residue Gly169. Arg181 is a D-glyceraldehyde 3-phosphate binding site. D-ribose 5-phosphate-binding positions include Gly230 and 251-252 (GS).

This sequence belongs to the PdxS/SNZ family.

It catalyses the reaction aldehydo-D-ribose 5-phosphate + D-glyceraldehyde 3-phosphate + L-glutamine = pyridoxal 5'-phosphate + L-glutamate + phosphate + 3 H2O + H(+). It functions in the pathway cofactor biosynthesis; pyridoxal 5'-phosphate biosynthesis. In terms of biological role, catalyzes the formation of pyridoxal 5'-phosphate from ribose 5-phosphate (RBP), glyceraldehyde 3-phosphate (G3P) and ammonia. The ammonia is provided by PDX2. Can also use ribulose 5-phosphate and dihydroxyacetone phosphate as substrates, resulting from enzyme-catalyzed isomerization of RBP and G3P, respectively. Also plays an indirect role in resistance to singlet oxygen-generating photosensitizers. This chain is Probable pyridoxal 5'-phosphate synthase subunit PDX1 (PDX1), found in Ginkgo biloba (Ginkgo).